The following is a 276-amino-acid chain: Formamidopyrimidine-DNA glycosylase (276 aa).

Pro2 serves as the catalytic Schiff-base intermediate with DNA. Glu3 functions as the Proton donor in the catalytic mechanism. Residue Lys58 is the Proton donor; for beta-elimination activity of the active site. DNA contacts are provided by His92, Arg111, and Lys154. An FPG-type zinc finger spans residues 239 to 273; the sequence is QVYGHVGEPCPVCGTKFEKIKVNGRGTTFCPHCQV. Arg263 functions as the Proton donor; for delta-elimination activity in the catalytic mechanism.

Belongs to the FPG family. Monomer. Requires Zn(2+) as cofactor.

The enzyme catalyses Hydrolysis of DNA containing ring-opened 7-methylguanine residues, releasing 2,6-diamino-4-hydroxy-5-(N-methyl)formamidopyrimidine.. It carries out the reaction 2'-deoxyribonucleotide-(2'-deoxyribose 5'-phosphate)-2'-deoxyribonucleotide-DNA = a 3'-end 2'-deoxyribonucleotide-(2,3-dehydro-2,3-deoxyribose 5'-phosphate)-DNA + a 5'-end 5'-phospho-2'-deoxyribonucleoside-DNA + H(+). In terms of biological role, involved in base excision repair of DNA damaged by oxidation or by mutagenic agents. Acts as a DNA glycosylase that recognizes and removes damaged bases. Has a preference for oxidized purines, such as 7,8-dihydro-8-oxoguanine (8-oxoG). Has AP (apurinic/apyrimidinic) lyase activity and introduces nicks in the DNA strand. Cleaves the DNA backbone by beta-delta elimination to generate a single-strand break at the site of the removed base with both 3'- and 5'-phosphates. The polypeptide is Formamidopyrimidine-DNA glycosylase (Lactobacillus helveticus (strain DPC 4571)).